The chain runs to 445 residues: Ribosomal protein uS12 methylthiotransferase RimO (445 aa).

In terms of domain architecture, MTTase N-terminal spans 4–119 (YKVGMVSLGC…INEAIMNFIN (116 aa)). Residues cysteine 13, cysteine 48, cysteine 82, cysteine 157, cysteine 161, and cysteine 164 each coordinate [4Fe-4S] cluster. The 231-residue stretch at 143-373 (TTDKATAYLR…MLLQKELSEE (231 aa)) folds into the Radical SAM core domain. The TRAM domain occupies 376 to 441 (KNKLGREYDV…EYDLVGVVCN (66 aa)).

This sequence belongs to the methylthiotransferase family. RimO subfamily. Requires [4Fe-4S] cluster as cofactor.

The protein resides in the cytoplasm. The enzyme catalyses L-aspartate(89)-[ribosomal protein uS12]-hydrogen + (sulfur carrier)-SH + AH2 + 2 S-adenosyl-L-methionine = 3-methylsulfanyl-L-aspartate(89)-[ribosomal protein uS12]-hydrogen + (sulfur carrier)-H + 5'-deoxyadenosine + L-methionine + A + S-adenosyl-L-homocysteine + 2 H(+). Catalyzes the methylthiolation of an aspartic acid residue of ribosomal protein uS12. The polypeptide is Ribosomal protein uS12 methylthiotransferase RimO (Clostridium perfringens (strain SM101 / Type A)).